The sequence spans 605 residues: Condensin-2 complex subunit H2 (605 aa).

Phosphothreonine is present on threonine 19. A phosphoserine mark is found at serine 95, serine 200, serine 208, serine 228, and serine 232. The interval 194 to 331 is disordered; sequence LEPEGMSPME…PFDSLESKPF (138 aa). The span at 256 to 266 shows a compositional bias: acidic residues; it reads GEDEDAEEAVE. Phosphoserine is present on residues serine 282, serine 284, serine 466, and serine 492.

It belongs to the CND2 H2 (condensin-2 subunit 2) family. As to quaternary structure, component of the condensin-2 complex, which contains the SMC2 and SMC4 heterodimer, and three non SMC subunits, NCAPG2, NCAPH2 and NCAPD3 that probably regulate the complex.

It localises to the nucleus. The protein localises to the chromosome. In terms of biological role, regulatory subunit of the condensin-2 complex, a complex that seems to provide chromosomes with an additional level of organization and rigidity and in establishing mitotic chromosome architecture. May promote the resolution of double-strand DNA catenanes (intertwines) between sister chromatids. Condensin-mediated compaction likely increases tension in catenated sister chromatids, providing directionality for type II topoisomerase-mediated strand exchanges toward chromatid decatenation. Required for decatenation of chromatin bridges at anaphase. Early in neurogenesis, may play an essential role to ensure accurate mitotic chromosome condensation in neuron stem cells, ultimately affecting neuron pool and cortex size. Seems to have lineage-specific role in T-cell development. The chain is Condensin-2 complex subunit H2 (NCAPH2) from Homo sapiens (Human).